The following is a 282-amino-acid chain: Exo-glucosaminidase LytG (282 aa).

The signal sequence occupies residues 1 to 29 (MARKKLKKRKLLISLFFLVSIPLALFVLA). In terms of domain architecture, GW spans 203–281 (SLKSVDLNAS…DDSAVEIKEA (79 aa)).

Belongs to the glycosyl hydrolase 73 family. Requires Mg(2+) as cofactor.

Its subcellular location is the secreted. It localises to the cell wall. With respect to regulation, inhibited by EDTA. In terms of biological role, is the major glucosaminidase responsible for peptidoglycan structural determination during vegetative growth. Catalyzes the hydrolysis of 1,4-beta-linkages between N-acetyl-D-glucosamine and N-acetylmuramic acid residues in peptidoglycan. Acts processively from the ends of the glycan strands. Also plays a role in motility, chemotaxis and cell division. This is Exo-glucosaminidase LytG (lytG) from Bacillus subtilis (strain 168).